The primary structure comprises 158 residues: Small ribosomal subunit protein uS7 (158 aa).

It belongs to the universal ribosomal protein uS7 family. As to quaternary structure, part of the 30S ribosomal subunit. Contacts proteins S9 and S11.

One of the primary rRNA binding proteins, it binds directly to 16S rRNA where it nucleates assembly of the head domain of the 30S subunit. Is located at the subunit interface close to the decoding center, probably blocks exit of the E-site tRNA. The sequence is that of Small ribosomal subunit protein uS7 from Porphyromonas gingivalis (strain ATCC 33277 / DSM 20709 / CIP 103683 / JCM 12257 / NCTC 11834 / 2561).